Reading from the N-terminus, the 166-residue chain is Ribosome maturation factor RimP (166 aa).

The protein belongs to the RimP family.

The protein resides in the cytoplasm. Its function is as follows. Required for maturation of 30S ribosomal subunits. The polypeptide is Ribosome maturation factor RimP (Psychrobacter arcticus (strain DSM 17307 / VKM B-2377 / 273-4)).